The chain runs to 499 residues: Probable dipeptidase B (499 aa).

The active site involves cysteine 26.

The protein belongs to the peptidase C69 family.

The catalysed reaction is an L-aminoacyl-L-amino acid + H2O = 2 an L-alpha-amino acid. This is Probable dipeptidase B (pepDB) from Streptococcus pyogenes serotype M18 (strain MGAS8232).